A 530-amino-acid chain; its full sequence is Chondroitin sulfate N-acetylgalactosaminyltransferase 1 (530 aa).

Topologically, residues 1-12 (MVRRGLLGWISR) are cytoplasmic. A helical; Signal-anchor for type II membrane protein transmembrane segment spans residues 13–33 (VVILLVLLCCAISVLYMLACT). The Lumenal portion of the chain corresponds to 34–530 (PKGDQEQLGL…QKQKASSKKT (497 aa)). The stretch at 57 to 93 (AVLQEREEQHRNYVNSLKRQIAQLKDELQARSEQFRS) forms a coiled coil. A disordered region spans residues 88–107 (SEQFRSGQDQASDATSLRSG). The span at 91–105 (FRSGQDQASDATSLR) shows a compositional bias: polar residues. N-linked (GlcNAc...) asparagine glycans are attached at residues Asn313 and Asn322. A divalent metal cation is bound by residues Asp358 and His475.

The protein belongs to the chondroitin N-acetylgalactosaminyltransferase family.

The protein resides in the golgi apparatus. The protein localises to the golgi stack membrane. It carries out the reaction 3-O-(beta-D-GlcA-(1-&gt;3)-beta-D-Gal-(1-&gt;3)-beta-D-Gal-(1-&gt;4)-beta-D-Xyl)-L-seryl-[protein] + UDP-N-acetyl-alpha-D-galactosamine = 3-O-(beta-D-GalNAc-(1-&gt;4)-beta-D-GlcA-(1-&gt;3)-beta-D-Gal-(1-&gt;3)-beta-D-Gal-(1-&gt;4)-beta-D-Xyl)-L-seryl-[protein] + UDP + H(+). Functionally, transfers 1,4-N-acetylgalactosamine (GalNAc) from UDP-GalNAc to the non-reducing end of glucuronic acid (GlcUA). Required for addition of the first GalNAc to the core tetrasaccharide linker and for elongation of chondroitin chains. Important role in chondroitin chain biosynthesis in cartilage formation, and subsequent endochondral ossification. Moreover, is involved in the metabolism of aggrecan. The protein is Chondroitin sulfate N-acetylgalactosaminyltransferase 1 of Mus musculus (Mouse).